The chain runs to 733 residues: mRNA 3'-end-processing protein rna14 (733 aa).

The tract at residues 1–45 is disordered; that stretch reads MNSDDNVEADASSNIIKDSPKIKEQENTSTVNESDVLATSTTASS. Positions 27–45 are enriched in polar residues; sequence NTSTVNESDVLATSTTASS. HAT repeat units follow at residues 85–117, 119–150, 158–193, 204–237, 269–302, and 312–344; these read GKHEELRETYEQMLRPFPYVPRVWVDYISSELA, NDFHAVELLFSRCLVKVLSVDLWTLYLSYIRR, QSRSTITQAYEFVINTIGVDILSGPIWSEFVDFLRS, QKLDHVRRIYQRAITTPIHNIEKLWRDYDAFENS, EGLRVYDFTFERKYTKVERIAYSRWMNWIKWEQS, and MLQNRIAYAFEQAMLYVPLCPQIWLDGFSYFLS. The span at 404–414 shows a compositional bias: low complexity; it reads DSKASSSSESS. A disordered region spans residues 404-425; it reads DSKASSSSESSTDGNPQEKKLP. One copy of the HAT 7 repeat lies at 523–557; that stretch reads NDETNARALFEKAIPRIAADEAKPIYQKWLDYESN.

It is found in the nucleus. The protein resides in the cytoplasm. Component of the cleavage factor IA (CFIA) complex, which is involved in the endonucleolytic cleavage during polyadenylation-dependent pre-mRNA 3'-end formation. The chain is mRNA 3'-end-processing protein rna14 (rna14) from Schizosaccharomyces pombe (strain 972 / ATCC 24843) (Fission yeast).